The primary structure comprises 269 residues: UPF0328 protein ECU03_0020 (269 aa).

It belongs to the UPF0328 family.

The sequence is that of UPF0328 protein ECU03_0020 from Encephalitozoon cuniculi (strain GB-M1) (Microsporidian parasite).